Here is a 529-residue protein sequence, read N- to C-terminus: Bifunctional purine biosynthesis protein PurH (529 aa).

The MGS-like domain maps to 1–148 (MNNARPIRRA…KNHKDTTIIV (148 aa)).

Belongs to the PurH family.

It carries out the reaction (6R)-10-formyltetrahydrofolate + 5-amino-1-(5-phospho-beta-D-ribosyl)imidazole-4-carboxamide = 5-formamido-1-(5-phospho-D-ribosyl)imidazole-4-carboxamide + (6S)-5,6,7,8-tetrahydrofolate. The enzyme catalyses IMP + H2O = 5-formamido-1-(5-phospho-D-ribosyl)imidazole-4-carboxamide. It participates in purine metabolism; IMP biosynthesis via de novo pathway; 5-formamido-1-(5-phospho-D-ribosyl)imidazole-4-carboxamide from 5-amino-1-(5-phospho-D-ribosyl)imidazole-4-carboxamide (10-formyl THF route): step 1/1. The protein operates within purine metabolism; IMP biosynthesis via de novo pathway; IMP from 5-formamido-1-(5-phospho-D-ribosyl)imidazole-4-carboxamide: step 1/1. This is Bifunctional purine biosynthesis protein PurH from Shewanella pealeana (strain ATCC 700345 / ANG-SQ1).